We begin with the raw amino-acid sequence, 380 residues long: Cytochrome b (380 aa).

Helical transmembrane passes span F34–A54, W78–I99, W114–L134, and F179–A199. Residues H84 and H98 each contribute to the heme b site. Residues H183 and H197 each coordinate heme b. H202 lines the a ubiquinone pocket. 4 consecutive transmembrane segments (helical) span residues L227 to S247, L289 to H309, L321 to S341, and F348 to P368.

This sequence belongs to the cytochrome b family. As to quaternary structure, the cytochrome bc1 complex contains 11 subunits: 3 respiratory subunits (MT-CYB, CYC1 and UQCRFS1), 2 core proteins (UQCRC1 and UQCRC2) and 6 low-molecular weight proteins (UQCRH/QCR6, UQCRB/QCR7, UQCRQ/QCR8, UQCR10/QCR9, UQCR11/QCR10 and a cleavage product of UQCRFS1). This cytochrome bc1 complex then forms a dimer. It depends on heme b as a cofactor.

Its subcellular location is the mitochondrion inner membrane. Functionally, component of the ubiquinol-cytochrome c reductase complex (complex III or cytochrome b-c1 complex) that is part of the mitochondrial respiratory chain. The b-c1 complex mediates electron transfer from ubiquinol to cytochrome c. Contributes to the generation of a proton gradient across the mitochondrial membrane that is then used for ATP synthesis. The protein is Cytochrome b (MT-CYB) of Cyrtonyx montezumae (Montezuma quail).